Reading from the N-terminus, the 379-residue chain is Lipoyl synthase 1, mitochondrial (379 aa).

Cys106, Cys111, Cys117, Cys137, Cys141, Cys144, and Ser352 together coordinate [4Fe-4S] cluster. Residues 122–341 (EHGTQTATIM…EERGNELGFL (220 aa)) form the Radical SAM core domain.

This sequence belongs to the radical SAM superfamily. Lipoyl synthase family. [4Fe-4S] cluster serves as cofactor.

The protein localises to the mitochondrion. It catalyses the reaction [[Fe-S] cluster scaffold protein carrying a second [4Fe-4S](2+) cluster] + N(6)-octanoyl-L-lysyl-[protein] + 2 oxidized [2Fe-2S]-[ferredoxin] + 2 S-adenosyl-L-methionine + 4 H(+) = [[Fe-S] cluster scaffold protein] + N(6)-[(R)-dihydrolipoyl]-L-lysyl-[protein] + 4 Fe(3+) + 2 hydrogen sulfide + 2 5'-deoxyadenosine + 2 L-methionine + 2 reduced [2Fe-2S]-[ferredoxin]. It participates in protein modification; protein lipoylation via endogenous pathway; protein N(6)-(lipoyl)lysine from octanoyl-[acyl-carrier-protein]: step 2/2. Catalyzes the radical-mediated insertion of two sulfur atoms into the C-6 and C-8 positions of the octanoyl moiety bound to the lipoyl domains of lipoate-dependent enzymes, thereby converting the octanoylated domains into lipoylated derivatives. This Drosophila yakuba (Fruit fly) protein is Lipoyl synthase 1, mitochondrial.